A 491-amino-acid chain; its full sequence is Glucose-6-phosphate 1-dehydrogenase (491 aa).

NADP(+) contacts are provided by residues Arg-49, 91–92, and Lys-146; that span reads DV. Substrate-binding residues include His-176, Lys-180, Glu-214, and Asp-233. Residue His-238 is the Proton acceptor of the active site. Substrate contacts are provided by Lys-338 and Lys-343.

Belongs to the glucose-6-phosphate dehydrogenase family.

It carries out the reaction D-glucose 6-phosphate + NADP(+) = 6-phospho-D-glucono-1,5-lactone + NADPH + H(+). It functions in the pathway carbohydrate degradation; pentose phosphate pathway; D-ribulose 5-phosphate from D-glucose 6-phosphate (oxidative stage): step 1/3. Its function is as follows. Catalyzes the oxidation of glucose 6-phosphate to 6-phosphogluconolactone. The protein is Glucose-6-phosphate 1-dehydrogenase of Buchnera aphidicola subsp. Acyrthosiphon pisum (strain APS) (Acyrthosiphon pisum symbiotic bacterium).